The following is a 1162-amino-acid chain: Leptin receptor (1162 aa).

Residues 1–21 (MMCQKFYVVLLHWEFLYVIAA) form the signal peptide. Topologically, residues 22 to 839 (LNLAYPISPW…AIDKQQNDAG (818 aa)) are extracellular. 5 disulfides stabilise this stretch: cysteine 37-cysteine 90, cysteine 89-cysteine 99, cysteine 131-cysteine 142, cysteine 186-cysteine 195, and cysteine 188-cysteine 193. N-linked (GlcNAc...) asparagine glycosylation is found at asparagine 41, asparagine 56, asparagine 73, and asparagine 98. Asparagine 187 carries an N-linked (GlcNAc...) asparagine glycan. In terms of domain architecture, Fibronectin type-III 1 spans 238 to 331 (PPLGLHMEVT…SPQVFTTQDV (94 aa)). N-linked (GlcNAc...) asparagine glycosylation is found at asparagine 275 and asparagine 345. The 99-residue stretch at 329–427 (QDVVYFPPKI…HRYAELYVID (99 aa)) folds into the Ig-like domain. 2 disulfide bridges follow: cysteine 350–cysteine 410 and cysteine 411–cysteine 416. Asparagine 431 carries an N-linked (GlcNAc...) asparagine glycan. Disulfide bonds link cysteine 434-cysteine 445, cysteine 471-cysteine 526, and cysteine 486-cysteine 496. The segment at 465–482 (HRRSLYCPDSPSIHPTSE) is leptin-binding. Residues asparagine 514, asparagine 622, asparagine 657, asparagine 668, asparagine 686, asparagine 695, asparagine 698, and asparagine 726 are each glycosylated (N-linked (GlcNAc...) asparagine). 3 Fibronectin type-III domains span residues 537–632 (PPSN…TLVM), 637–729 (PMRG…NLTF), and 738–832 (AVES…DAID). The WSXWS motif motif lies at 620-624 (WSNWS). The chain crosses the membrane as a helical span at residues 840-860 (LYVIVPIIISSCVLLLGTLLI). Residues 861–1162 (SHQRMKKLFW…MENKMCDLTV (302 aa)) lie on the Cytoplasmic side of the membrane. The Box 1 motif signature appears at 869-877 (FWDDVPNPK). Serine 880 carries the post-translational modification Phosphoserine. Residues 891–896 (ETFEHL) are required for JAK2 activation. The required for STAT3 phosphorylation stretch occupies residues 896–904 (LFTKHAESV). Tyrosine 985 is subject to Phosphotyrosine; by JAK2. Phosphotyrosine is present on tyrosine 1077. The residue at position 1138 (tyrosine 1138) is a Phosphotyrosine; by JAK2.

Belongs to the type I cytokine receptor family. Type 2 subfamily. Present as a mixture of monomers and dimers. The phosphorylated receptor binds a number of SH2 domain-containing proteins such as JAK2, STAT3, PTPN11, and SOCS3. Interaction with SOCS3 inhibits JAK/STAT signaling and MAPK cascade. In terms of processing, on ligand binding, phosphorylated on two conserved C-terminal tyrosine residues (isoform B only) by JAK2. Tyr-985 is required for complete binding and activation of PTPN11, ERK/FOS activation,for interaction with SOCS3 and SOCS3 mediated inhibition of leptin signaling. Phosphorylation on Tyr-1138 is required for STAT3 binding/activation. Phosphorylation of Tyr-1077 has a more accessory role. In terms of tissue distribution, isoform A: highest level of expression in lung and kidney, also present in heart, brain, spleen, liver, muscle, choroid plexus and hypothalamus. Isoform B: highest levels of expression in hypothalamus and lower levels in brain, testes and adipose tissue. Expressed by neurons of the parabrachial nucleus. Expressed by peripheral blood mononuclear cells and CD4(+) T-cells. Isoform E: expressed in adipose tissue, liver, hypothalamus, cerebral microvessels, heart, and testes.

It is found in the cell membrane. Its subcellular location is the basolateral cell membrane. It localises to the secreted. Receptor for hormone LEP/leptin. On ligand binding, mediates LEP central and peripheral effects through the activation of different signaling pathways such as JAK2/STAT3 and MAPK cascade/FOS. In the hypothalamus, LEP acts as an appetite-regulating factor that induces a decrease in food intake and an increase in energy consumption by inducing anorexinogenic factors and suppressing orexigenic neuropeptides, also regulates bone mass and secretion of hypothalamo-pituitary-adrenal hormones. In the periphery, increases basal metabolism, influences reproductive function, regulates pancreatic beta-cell function and insulin secretion, is pro-angiogenic and affects innate and adaptive immunity. Control of energy homeostasis and melanocortin production (stimulation of POMC and full repression of AgRP transcription) is mediated by STAT3 signaling, whereas distinct signals regulate NPY and the control of fertility, growth and glucose homeostasis. Involved in the regulation of counter-regulatory response to hypoglycemia by inhibiting neurons of the parabrachial nucleus. Has a specific effect on T lymphocyte responses, differentially regulating the proliferation of naive and memory T-cells. Leptin increases Th1 and suppresses Th2 cytokine production. Functionally, may transport LEP across the blood-brain barrier. Binds LEP and mediates LEP endocytosis. Does not induce phosphorylation of and activate STAT3. In terms of biological role, antagonizes Isoform A and isoform B-mediated LEP binding and endocytosis. The protein is Leptin receptor (Lepr) of Mus musculus (Mouse).